Here is a 206-residue protein sequence, read N- to C-terminus: Probable 5-formyltetrahydrofolate cyclo-ligase (206 aa).

Residues 8 to 12 (KSELR) and arginine 12 each bind ATP. Residues valine 54, glutamate 59, and 146 to 150 (HGKGY) contribute to the substrate site. 143 to 151 (RCGHGKGYY) is a binding site for ATP. Aspartate 152 and aspartate 188 together coordinate Mg(2+).

It belongs to the 5-formyltetrahydrofolate cyclo-ligase family. Monomer. It depends on Mg(2+) as a cofactor.

Its subcellular location is the cytoplasm. It carries out the reaction (6S)-5-formyl-5,6,7,8-tetrahydrofolate + ATP = (6R)-5,10-methenyltetrahydrofolate + ADP + phosphate. Contributes to tetrahydrofolate metabolism. Helps regulate carbon flow through the folate-dependent one-carbon metabolic network that supplies carbon for the biosynthesis of purines, thymidine and amino acids. Catalyzes the irreversible conversion of 5-formyltetrahydrofolate (5-CHO-H(4)PteGlu) to yield 5,10-methenyltetrahydrofolate. The protein is Probable 5-formyltetrahydrofolate cyclo-ligase of Caenorhabditis elegans.